We begin with the raw amino-acid sequence, 278 residues long: Probable CCR4-associated factor 1 homolog 5 (278 aa).

A divalent metal cation contacts are provided by Asp-30, Glu-32, Asp-145, and Asp-217.

It belongs to the CAF1 family. In terms of assembly, component of the CCR4-NOT complex, at least composed of CRR4 and CAF1 proteins. A divalent metal cation serves as cofactor.

It localises to the nucleus. Its subcellular location is the cytoplasm. The catalysed reaction is Exonucleolytic cleavage of poly(A) to 5'-AMP.. Ubiquitous transcription factor required for a diverse set of processes. It is a component of the CCR4 complex involved in the control of gene expression. In Arabidopsis thaliana (Mouse-ear cress), this protein is Probable CCR4-associated factor 1 homolog 5 (CAF1-5).